A 547-amino-acid polypeptide reads, in one-letter code: Trigger factor-like protein TIG, Chloroplastic (547 aa).

Residues 1 to 77 (MELCVISTTT…SHGGNFRLFA (77 aa)) constitute a chloroplast transit peptide. Ala78 is modified (N-acetylalanine). In terms of domain architecture, PPIase FKBP-type spans 271-366 (GDLAVVDISA…LFYRDLPTLD (96 aa)).

It belongs to the FKBP-type PPIase family. Tig subfamily.

It localises to the plastid. The protein localises to the chloroplast. The catalysed reaction is [protein]-peptidylproline (omega=180) = [protein]-peptidylproline (omega=0). Involved in protein export. Acts as a chaperone by maintaining the newly synthesized protein in an open conformation. Functions as a peptidyl-prolyl cis-trans isomerase. This is Trigger factor-like protein TIG, Chloroplastic (TIG) from Arabidopsis thaliana (Mouse-ear cress).